Reading from the N-terminus, the 312-residue chain is Acetyl-coenzyme A carboxylase carboxyl transferase subunit beta (312 aa).

The 270-residue stretch at 24 to 293 (LWIKCPDSGQ…PHADEVAAPP (270 aa)) folds into the CoA carboxyltransferase N-terminal domain. Residues 286 to 312 (ADEVAAPPPPDVEGPPPAAEPVALPPA) form a disordered region. Positions 291 to 312 (APPPPDVEGPPPAAEPVALPPA) are enriched in pro residues.

It belongs to the AccD/PCCB family. Acetyl-CoA carboxylase is a heterohexamer composed of biotin carboxyl carrier protein (AccB), biotin carboxylase (AccC) and two subunits each of ACCase subunit alpha (AccA) and ACCase subunit beta (AccD).

It is found in the cytoplasm. The enzyme catalyses N(6)-carboxybiotinyl-L-lysyl-[protein] + acetyl-CoA = N(6)-biotinyl-L-lysyl-[protein] + malonyl-CoA. The protein operates within lipid metabolism; malonyl-CoA biosynthesis; malonyl-CoA from acetyl-CoA: step 1/1. Functionally, component of the acetyl coenzyme A carboxylase (ACC) complex. Biotin carboxylase (BC) catalyzes the carboxylation of biotin on its carrier protein (BCCP) and then the CO(2) group is transferred by the transcarboxylase to acetyl-CoA to form malonyl-CoA. The sequence is that of Acetyl-coenzyme A carboxylase carboxyl transferase subunit beta from Afipia carboxidovorans (strain ATCC 49405 / DSM 1227 / KCTC 32145 / OM5) (Oligotropha carboxidovorans).